The following is a 1699-amino-acid chain: Cilia- and flagella-associated protein 61 (1699 aa).

The segment covering 1–22 (MYSNNQLDNPNHSRSQYRNGDQ) has biased composition (polar residues). 3 disordered regions span residues 1–23 (MYSNNQLDNPNHSRSQYRNGDQS), 489–515 (QLKRPQKKVTKRPKRQKEEDKKEDEFK), and 1340–1365 (ERDANSENADKGFDDTQSRDGDEENQ). Over residues 489–503 (QLKRPQKKVTKRPKR) the composition is skewed to basic residues. 2 stretches are compositionally biased toward basic and acidic residues: residues 504–515 (QKEEDKKEDEFK) and 1340–1359 (ERDANSENADKGFDDTQSRD).

Its subcellular location is the cell projection. The protein localises to the cilium. Functionally, as component of a spoke-associated complex, regulates ciliary mobility by mediating a stable and functional assembly of the radial spoke 3 (RS3). This is Cilia- and flagella-associated protein 61 from Tetrahymena thermophila (strain SB210).